The primary structure comprises 574 residues: Desiccation/radiation resistance protein DR_1769 (574 aa).

The N-terminal stretch at 1–33 (MPDPAARRFSLPPFPLAALALSVALLGAPASLA) is a signal peptide. Positions 400–438 (TAQTQARQAAAAASTSQQPRLPTLAQAPAPTPAPAQTTP) are enriched in low complexity. A disordered region spans residues 400–461 (TAQTQARQAA…APVPPVASPA (62 aa)). The span at 439-459 (RPQPTPAQPATPAAPVPPVAS) shows a compositional bias: pro residues.

Plays an important role in resistance to desiccation and radiation, maybe by protecting genome integrity under extreme conditions. This Deinococcus radiodurans (strain ATCC 13939 / DSM 20539 / JCM 16871 / CCUG 27074 / LMG 4051 / NBRC 15346 / NCIMB 9279 / VKM B-1422 / R1) protein is Desiccation/radiation resistance protein DR_1769.